The primary structure comprises 763 residues: Thyrotropin receptor (763 aa).

The first 21 residues, 1 to 21 (MRPTPLLRLALFLVLPSSLGG), serve as a signal peptide directing secretion. Residues 22–412 (ERCPSPPCEC…EFNPCEDIMG (391 aa)) are Extracellular-facing. A disulfide bond links cysteine 31 and cysteine 41. The stretch at 51–74 (PPSTQTLKFIETHLKTIPSRAFSN) is one LRR 1 repeat. 2 N-linked (GlcNAc...) asparagine glycosylation sites follow: asparagine 77 and asparagine 99. LRR repeat units lie at residues 125-150 (LPLLKFLGIFNTGLRVFPDLTKIYST), 151-174 (DVFFILEITDNPYMTSIPANAFQG), 176-199 (CNETLTLKLYNNGFTSIQGHAFNG), 201-223 (KLDAVYLNKNKYLTVIGQDAFAG), and 225-248 (YSGPTLLDISYTSVTALPSKGLEH). N-linked (GlcNAc...) asparagine glycans are attached at residues asparagine 177 and asparagine 198. A glycan (N-linked (GlcNAc...) asparagine) is linked at asparagine 302. At tyrosine 384 the chain carries Sulfotyrosine. The helical transmembrane segment at 413–440 (YKFLRIVVWFVSLLALLGNVFVLVILLT) threads the bilayer. The Cytoplasmic portion of the chain corresponds to 441–449 (SHYKLTVPR). A helical membrane pass occupies residues 450–472 (FLMCNLAFADFCMGLYLLLIASV). The Extracellular portion of the chain corresponds to 473 to 493 (DLYTQSEYYNHAIDWQTGPGC). Cysteine 493 and cysteine 568 are joined by a disulfide. A helical transmembrane segment spans residues 494–516 (NTAGFFTVFASELSVYTLTVITL). Topologically, residues 517-536 (ERWHAITFAMRLDRKIRLWH) are cytoplasmic. A helical membrane pass occupies residues 537 to 559 (AYVIMLGGWVCCFLLALLPLVGI). Residues 560–579 (SSYAKVSICLPMDTETPLAL) lie on the Extracellular side of the membrane. Residues 580-601 (AYIILVLLLNIIAFIIVCACYV) traverse the membrane as a helical segment. Topologically, residues 602 to 624 (KIYITVRNPHYNPGDKDTRIAKR) are cytoplasmic. A helical transmembrane segment spans residues 625-648 (MAVLIFTDFMCMAPISFYALSALM). The Extracellular portion of the chain corresponds to 649-659 (NKPLITVTNSK). Residues 660–681 (ILLVLFYPLNSCANPFLYAIFT) traverse the membrane as a helical segment. The Cytoplasmic portion of the chain corresponds to 682–763 (KAFQRDVFML…TSKEYKRTVL (82 aa)). Residues 742 to 763 (ENSHLTPKQQDQTSKEYKRTVL) are disordered. A compositionally biased stretch (polar residues) spans 744–753 (SHLTPKQQDQ). Positions 754 to 763 (TSKEYKRTVL) are enriched in basic and acidic residues. The short motif at 761–763 (TVL) is the PDZ-binding element.

It belongs to the G-protein coupled receptor 1 family. FSH/LSH/TSH subfamily. Interacts with heterodimer GPHA2:GPHB5; this interaction stimulates cAMP production. Interacts (via the PDZ-binding motif) with SCRIB; regulates TSHR trafficking and function. In terms of processing, glycosylated. Sulfated. Sulfation on Tyr-384 plays a role in thyrotropin receptor binding and activation.

The protein localises to the cell membrane. Its subcellular location is the basolateral cell membrane. Receptor for the thyroid-stimulating hormone (TSH) or thyrotropin. Also acts as a receptor for the heterodimeric glycoprotein hormone (GPHA2:GPHB5) or thyrostimulin. The activity of this receptor is mediated by G proteins which activate adenylate cyclase. Plays a central role in controlling thyroid cell metabolism. The chain is Thyrotropin receptor (TSHR) from Bos taurus (Bovine).